The primary structure comprises 273 residues: Large ribosomal subunit protein uL2 (273 aa).

Residues 221–262 (RGTAMNPVDHPHGGGEGRNFGKHPVTPWGVQTKGKKTRHNKR) form a disordered region. Residues 253-262 (KGKKTRHNKR) show a composition bias toward basic residues.

This sequence belongs to the universal ribosomal protein uL2 family. In terms of assembly, part of the 50S ribosomal subunit. Forms a bridge to the 30S subunit in the 70S ribosome.

One of the primary rRNA binding proteins. Required for association of the 30S and 50S subunits to form the 70S ribosome, for tRNA binding and peptide bond formation. It has been suggested to have peptidyltransferase activity; this is somewhat controversial. Makes several contacts with the 16S rRNA in the 70S ribosome. The sequence is that of Large ribosomal subunit protein uL2 from Aggregatibacter actinomycetemcomitans (Actinobacillus actinomycetemcomitans).